The primary structure comprises 245 residues: Uridylate kinase (245 aa).

15-18 (KLSG) serves as a coordination point for ATP. The tract at residues 23–28 (GEEGFG) is involved in allosteric activation by GTP. A UMP-binding site is contributed by G57. G58 and R62 together coordinate ATP. UMP is bound by residues D77 and 138-145 (TGNPFCTT). ATP is bound by residues T165, Y171, and D174.

This sequence belongs to the UMP kinase family. In terms of assembly, homohexamer.

It localises to the cytoplasm. It catalyses the reaction UMP + ATP = UDP + ADP. It participates in pyrimidine metabolism; CTP biosynthesis via de novo pathway; UDP from UMP (UMPK route): step 1/1. Its activity is regulated as follows. Allosterically activated by GTP. Inhibited by UTP. Functionally, catalyzes the reversible phosphorylation of UMP to UDP. The protein is Uridylate kinase of Shewanella putrefaciens (strain CN-32 / ATCC BAA-453).